The primary structure comprises 240 residues: Large ribosomal subunit protein uL2 (240 aa).

Positions 1–11 (MGKRLISQNRG) are enriched in polar residues. Disordered regions lie at residues 1 to 25 (MGKR…HKRK) and 207 to 240 (GGRH…TGKR). 2 stretches are compositionally biased toward basic residues: residues 13 to 25 (GTPK…HKRK) and 224 to 240 (SPGR…TGKR).

Belongs to the universal ribosomal protein uL2 family. Part of the 50S ribosomal subunit. Forms a bridge to the 30S subunit in the 70S ribosome.

One of the primary rRNA binding proteins. Required for association of the 30S and 50S subunits to form the 70S ribosome, for tRNA binding and peptide bond formation. It has been suggested to have peptidyltransferase activity; this is somewhat controversial. Makes several contacts with the 16S rRNA in the 70S ribosome. The chain is Large ribosomal subunit protein uL2 from Methanococcus maripaludis (strain DSM 14266 / JCM 13030 / NBRC 101832 / S2 / LL).